A 388-amino-acid polypeptide reads, in one-letter code: Chorismate synthase (388 aa).

R39 and R45 together coordinate NADP(+). FMN is bound by residues 132–134, 251–252, G296, 311–315, and R337; these read RSS, NA, and KPIPT.

This sequence belongs to the chorismate synthase family. As to quaternary structure, homotetramer. FMNH2 serves as cofactor.

It carries out the reaction 5-O-(1-carboxyvinyl)-3-phosphoshikimate = chorismate + phosphate. It participates in metabolic intermediate biosynthesis; chorismate biosynthesis; chorismate from D-erythrose 4-phosphate and phosphoenolpyruvate: step 7/7. Catalyzes the anti-1,4-elimination of the C-3 phosphate and the C-6 proR hydrogen from 5-enolpyruvylshikimate-3-phosphate (EPSP) to yield chorismate, which is the branch point compound that serves as the starting substrate for the three terminal pathways of aromatic amino acid biosynthesis. This reaction introduces a second double bond into the aromatic ring system. The protein is Chorismate synthase of Staphylococcus haemolyticus (strain JCSC1435).